A 764-amino-acid chain; its full sequence is DNA-binding protein SATB1 (764 aa).

The span at 1-15 shows a compositional bias: basic and acidic residues; the sequence is MDHLNEATQGKEHSE. The tract at residues 1-56 is disordered; it reads MDHLNEATQGKEHSEMSNNVSDPKGPPAKIARLEQNGSPLGRGRLGSTGGKMQGVP. A Nuclear localization signal motif is present at residues 20-40; sequence VSDPKGPPAKIARLEQNGSPL. Gly residues predominate over residues 43–52; sequence GRLGSTGGKM. Lys51 participates in a covalent cross-link: Glycyl lysine isopeptide (Lys-Gly) (interchain with G-Cter in SUMO2). The CMP domain occupies 71-172; that stretch reads GTMLPVFCVV…VVTLKIQLHS (102 aa). An N6-acetyllysine modification is found at Lys136. Positions 139 to 143 match the Protein interaction motif; the sequence is PVPLS. Residues 175-248 enclose the CUTL domain; sequence KLEDLPPEQW…WYKHFKKTKD (74 aa). Phosphoserine is present on Ser185. Positions 224 to 278 are nuclear matrix targeting sequence (NMTS); that stretch reads YYANVSAAKCQEFGRWYKHFKKTKDMMVEMDSLSELSQQGANHVNFGQQPVPGNT. Residues 224–278 carry the Nuclear matrix targeting sequence (NMTS) motif; it reads YYANVSAAKCQEFGRWYKHFKKTKDMMVEMDSLSELSQQGANHVNFGQQPVPGNT. Positions 266–296 are enriched in polar residues; the sequence is HVNFGQQPVPGNTAEQPPSPAQLSHGSQPSV. Positions 266–307 are disordered; it reads HVNFGQQPVPGNTAEQPPSPAQLSHGSQPSVRTPLPNLHPGL. A DNA-binding region (CUT 1) is located at residues 361-448; sequence LEQQVSTNTE…ERDRIYQDER (88 aa). DNA-binding positions include Gln390, 400–410, and Asn425; that span reads RTQGLLSEILR. The disordered stretch occupies residues 450 to 474; the sequence is RSLNAASAMGPAPLLSTPPSRPPQV. The CUT 2 DNA-binding region spans 484-571; the sequence is NGKPENNTMN…ERDAIYEQES (88 aa). The tract at residues 591-650 is disordered; it reads QIQQQQQQQQQQQQQQQPPPPPPQPQPQPQAGPRLPPRQPTVASSAESDEENRQKTRPRT. Residues 593–606 are compositionally biased toward low complexity; sequence QQQQQQQQQQQQQQ. The span at 607-629 shows a compositional bias: pro residues; it reads QPPPPPPQPQPQPQAGPRLPPRQ. Phosphoserine is present on Ser638. The segment at residues 646-705 is a DNA-binding region (homeobox); the sequence is TRPRTKISVEALGILQSFIQDVGLYPDEEAIQTLSAQLDLPKYTIIKFFQNQRYYLKHHG. Lys745 participates in a covalent cross-link: Glycyl lysine isopeptide (Lys-Gly) (interchain with G-Cter in SUMO).

The protein belongs to the CUT homeobox family. Interacts with PCAF. Interacts with sumoylated PML and HDAC1 Tat via the CMP domain. Also interacts with DYNLT3 and POLR2J2. Binds to EP300. Homodimer. Part of the nuclear protein complex gamma-globin promoter and enhancer binding factor (gamma-PE) composed at least of SATB1 and HOXB2. Interaction with CtBP1 when not acetylated stabilizes attachment to DNA and promotes transcription repression. Interacts with CUX1 (via DNA-binding domains); the interaction inhibits the attachment of both proteins to DNA. Post-translationally, sumoylated. Sumoylation promotes cleavage by caspases. In terms of processing, phosphorylated by PKC. Acetylated by PCAF. Phosphorylated form interacts with HDAC1, but unphosphorylated form interacts with PCAF. DNA binding properties are activated by phosphorylation and inactivated by acetylation. In opposition, gene expression is down-regulated by phosphorylation but up-regulated by acetylation. Cleaved at Asp-254 by caspase-3 and caspase-6 during T-cell apoptosis in thymus and during B-cell stimulation. The cleaved forms cannot dimerize and lose transcription regulation function because of impaired DNA and chromatin association. In terms of tissue distribution, expressed in the subventricular zone, rostral migratory stream and in the olfactory bulb (at protein level). Mainly expressed in thymus, spleen, and lymph nodes with a lower level observed in the brain.

It localises to the nucleus. Its subcellular location is the PML body. In terms of biological role, required for the switching of fetal globin species, and beta- and gamma-globin genes regulation during erythroid differentiation. Plays a role in chromatin organization and nuclear architecture during apoptosis. Crucial silencing factor contributing to the initiation of X inactivation mediated by Xist RNA that occurs during embryogenesis and in lymphoma. Binds to DNA at special AT-rich sequences, the consensus SATB1-binding sequence (CSBS), at nuclear matrix- or scaffold-associated regions. Thought to recognize the sugar-phosphate structure of double-stranded DNA. Transcriptional repressor controlling nuclear and viral gene expression in a phosphorylated and acetylated status-dependent manner, by binding to matrix attachment regions (MARs) of DNA and inducing a local chromatin-loop remodeling. Acts as a docking site for several chromatin remodeling enzymes and also by recruiting corepressors (HDACs) or coactivators (HATs) directly to promoters and enhancers. Modulates genes that are essential in the maturation of the immune T-cell CD8SP from thymocytes. Promotes neuronal differentiation of neural stem/progenitor cells in the adult subventricular zone, possibly by positively regulating the expression of NEUROD1. This is DNA-binding protein SATB1 (Satb1) from Mus musculus (Mouse).